The primary structure comprises 344 residues: Phosphate acyltransferase (344 aa).

It belongs to the PlsX family. In terms of assembly, homodimer. Probably interacts with PlsY.

The protein localises to the cytoplasm. It carries out the reaction a fatty acyl-[ACP] + phosphate = an acyl phosphate + holo-[ACP]. It participates in lipid metabolism; phospholipid metabolism. Catalyzes the reversible formation of acyl-phosphate (acyl-PO(4)) from acyl-[acyl-carrier-protein] (acyl-ACP). This enzyme utilizes acyl-ACP as fatty acyl donor, but not acyl-CoA. This Cyanothece sp. (strain PCC 7425 / ATCC 29141) protein is Phosphate acyltransferase.